Here is a 758-residue protein sequence, read N- to C-terminus: 5-methyltetrahydropteroyltriglutamate--homocysteine methyltransferase (758 aa).

Residues 16 to 19 (RELK) and K112 contribute to the 5-methyltetrahydropteroyltri-L-glutamate site. L-homocysteine contacts are provided by residues 433–435 (IGS) and E486. L-methionine is bound by residues 433–435 (IGS) and E486. Residues 517–518 (RC) and W563 contribute to the 5-methyltetrahydropteroyltri-L-glutamate site. L-homocysteine is bound at residue D601. D601 provides a ligand contact to L-methionine. E607 lines the 5-methyltetrahydropteroyltri-L-glutamate pocket. Positions 643, 645, and 667 each coordinate Zn(2+). H696 serves as the catalytic Proton donor. Position 728 (C728) interacts with Zn(2+).

The protein belongs to the vitamin-B12 independent methionine synthase family. Zn(2+) serves as cofactor.

It carries out the reaction 5-methyltetrahydropteroyltri-L-glutamate + L-homocysteine = tetrahydropteroyltri-L-glutamate + L-methionine. It participates in amino-acid biosynthesis; L-methionine biosynthesis via de novo pathway; L-methionine from L-homocysteine (MetE route): step 1/1. In terms of biological role, catalyzes the transfer of a methyl group from 5-methyltetrahydrofolate to homocysteine resulting in methionine formation. This chain is 5-methyltetrahydropteroyltriglutamate--homocysteine methyltransferase, found in Neisseria meningitidis serogroup A / serotype 4A (strain DSM 15465 / Z2491).